A 195-amino-acid chain; its full sequence is ATP-dependent Clp protease proteolytic subunit (195 aa).

Ser-101 (nucleophile) is an active-site residue. Residue His-126 is part of the active site.

This sequence belongs to the peptidase S14 family.

It localises to the plastid. Its subcellular location is the chloroplast stroma. It carries out the reaction Hydrolysis of proteins to small peptides in the presence of ATP and magnesium. alpha-casein is the usual test substrate. In the absence of ATP, only oligopeptides shorter than five residues are hydrolyzed (such as succinyl-Leu-Tyr-|-NHMec, and Leu-Tyr-Leu-|-Tyr-Trp, in which cleavage of the -Tyr-|-Leu- and -Tyr-|-Trp bonds also occurs).. Functionally, cleaves peptides in various proteins in a process that requires ATP hydrolysis. Has a chymotrypsin-like activity. Plays a major role in the degradation of misfolded proteins. This chain is ATP-dependent Clp protease proteolytic subunit, found in Bigelowiella natans (Pedinomonas minutissima).